The sequence spans 544 residues: Chaperonin GroEL 2 (544 aa).

Residues 29–32 (TLGP), 86–90 (DGTTT), Gly-413, 479–481 (NAA), and Asp-495 contribute to the ATP site.

It belongs to the chaperonin (HSP60) family. As to quaternary structure, forms a cylinder of 14 subunits composed of two heptameric rings stacked back-to-back. Interacts with the co-chaperonin GroES.

The protein localises to the cytoplasm. It carries out the reaction ATP + H2O + a folded polypeptide = ADP + phosphate + an unfolded polypeptide.. Its function is as follows. Together with its co-chaperonin GroES, plays an essential role in assisting protein folding. The GroEL-GroES system forms a nano-cage that allows encapsulation of the non-native substrate proteins and provides a physical environment optimized to promote and accelerate protein folding. The chain is Chaperonin GroEL 2 from Synechococcus sp. (strain CC9605).